A 309-amino-acid polypeptide reads, in one-letter code: Taste receptor type 2 member 124 (309 aa).

Residues 1–7 (MVPVLHS) are Extracellular-facing. The helical transmembrane segment at 8 to 28 (LSTIILIAEFVWGNLSNGLIV) threads the bilayer. Topologically, residues 29-46 (LKNCIDWINKKELSTVDQ) are cytoplasmic. Residues 47–67 (ILIVLAISRISLIWETLIIWV) traverse the membrane as a helical segment. At 68-86 (KDQLISSITIEELKIIVFS) the chain is on the extracellular side. The chain crosses the membrane as a helical span at residues 87-107 (FILSSHFSLWLATALSIFYLF). Topologically, residues 108–127 (RIPNCYWQIFLYLKWRIKQL) are cytoplasmic. Residues 128 to 148 (IVHMLLGSLVFLVANMIQITI) form a helical membrane-spanning segment. Topologically, residues 149–183 (TLEERFYQYGGNTSVNSMETEFSILIELMLFNMTM) are extracellular. 2 N-linked (GlcNAc...) asparagine glycosylation sites follow: Asn160 and Asn180. The chain crosses the membrane as a helical span at residues 184–204 (FSIIPFSLALISFLLLIFSLW). The Cytoplasmic portion of the chain corresponds to 205 to 230 (KHLQKMPLNSRGDRDPSATAHRNALR). The helical transmembrane segment at 231-251 (ILVSFLLLYTIYFLSLLISWV) threads the bilayer. Residues 252–261 (AQKNQSELVH) are Extracellular-facing. N-linked (GlcNAc...) asparagine glycosylation is present at Asn255. Residues 262–282 (IICMITSLVYPSFHSYILILG) form a helical membrane-spanning segment. The Cytoplasmic portion of the chain corresponds to 283–309 (NYKLKQTSLWVMRQLGCRMKRQNTPTT).

Belongs to the G-protein coupled receptor T2R family.

The protein localises to the membrane. In terms of biological role, putative taste receptor which may play a role in the perception of bitterness. The protein is Taste receptor type 2 member 124 of Mus musculus (Mouse).